We begin with the raw amino-acid sequence, 204 residues long: Probable peptidyl-tRNA hydrolase (204 aa).

His36 acts as the Proton acceptor in catalysis. Residues Asn86 and Asn132 each contribute to the tRNA site.

This sequence belongs to the PTH family.

The catalysed reaction is an N-acyl-L-alpha-aminoacyl-tRNA + H2O = an N-acyl-L-amino acid + a tRNA + H(+). Peptidyl-tRNA hydrolase that cleaves nascent chains-tRNAs that are not stably fixed in the P-site of 60S ribosome-nascent chain complexes. Acts downstream of the ribosome-associated quality control (RQC) pathway to release non-ubiquitinated nascent chains from 60S and 80S ribosome-nascent chain complexes. Does not act on ubiquitinated nascent chains, which are cleaved by ANKZF1 for degradation. The protein is Probable peptidyl-tRNA hydrolase of Mus musculus (Mouse).